Consider the following 88-residue polypeptide: Large ribosomal subunit protein bL31B (88 aa).

This sequence belongs to the bacterial ribosomal protein bL31 family. Type B subfamily. As to quaternary structure, part of the 50S ribosomal subunit.

The sequence is that of Large ribosomal subunit protein bL31B from Bordetella bronchiseptica (strain ATCC BAA-588 / NCTC 13252 / RB50) (Alcaligenes bronchisepticus).